The primary structure comprises 599 residues: Microtubule-associated protein 70-2 (599 aa).

A disordered region spans residues 1–30; the sequence is MADGGGGEEGSASALRGSARRRGAVQPAGL. The stretch at 43–349 forms a coiled coil; the sequence is DPVKVELNRL…ARSEAQLKEK (307 aa). Residues 227–460 are required for targeting to microtubules; sequence ILDRLHRQKV…HLLNRSTDAV (234 aa). Disordered regions lie at residues 357–453 and 557–599; these read LEDG…PHLL and AMRL…RNLQ. A compositionally biased stretch (low complexity) spans 404-420; that stretch reads RRSPSFNSRSSLSTSSS. A coiled-coil region spans residues 533–570; the sequence is LTKAMEVEAKKMRREVAAMEKEVAAMRLDKDQENKAKR. Residues 557 to 568 show a composition bias toward basic and acidic residues; the sequence is AMRLDKDQENKA.

It belongs to the MAP70 family.

Its subcellular location is the cytoplasm. It is found in the cytoskeleton. Plant-specific protein that interact with microtubules. The protein is Microtubule-associated protein 70-2 (MAP70.2) of Oryza sativa subsp. japonica (Rice).